The chain runs to 334 residues: Mediator of RNA polymerase II transcription subunit 4 (334 aa).

The stretch at 76–100 forms a coiled coil; the sequence is LIRTLKAHVEKRDEVIQQVENNLKA. Positions 188–203 are enriched in low complexity; it reads SSAQKPIIASPSASSS. Disordered stretches follow at residues 188 to 234 and 252 to 334; these read SSAQ…GYGA and EKQW…GRNK. Polar residues-rich tracts occupy residues 204–225 and 264–282; these read NGGT…TNGD and ATSS…SSPS.

Belongs to the Mediator complex subunit 4 family. As to quaternary structure, component of the Mediator complex.

The protein localises to the nucleus. Component of the Mediator complex, a coactivator involved in the regulated transcription of nearly all RNA polymerase II-dependent genes. Mediator functions as a bridge to convey information from gene-specific regulatory proteins to the basal RNA polymerase II transcription machinery. Mediator is recruited to promoters by direct interactions with regulatory proteins and serves as a scaffold for the assembly of a functional preinitiation complex with RNA polymerase II and the general transcription factors. This is Mediator of RNA polymerase II transcription subunit 4 (mdt-4) from Caenorhabditis briggsae.